We begin with the raw amino-acid sequence, 158 residues long: MLTHLDSQGRAHMVDVTDKATTFREATAEARVRMLPATLQMIVAGEHPKGDVFAVARIAGIQAAKKTSDLIPLCHPLMLTGVKVELSAEGDDCVHITARCKLSGQTGVEMEALTAASVAALTIYDMCKAVDRGMVIEQVRLLEKLGGKSGHYKLEEQA.

Substrate-binding positions include 73 to 75 (LCH) and 110 to 111 (ME). D125 is an active-site residue.

This sequence belongs to the MoaC family. As to quaternary structure, homohexamer; trimer of dimers.

It catalyses the reaction (8S)-3',8-cyclo-7,8-dihydroguanosine 5'-triphosphate = cyclic pyranopterin phosphate + diphosphate. It functions in the pathway cofactor biosynthesis; molybdopterin biosynthesis. Catalyzes the conversion of (8S)-3',8-cyclo-7,8-dihydroguanosine 5'-triphosphate to cyclic pyranopterin monophosphate (cPMP). The sequence is that of Cyclic pyranopterin monophosphate synthase from Ectopseudomonas mendocina (strain ymp) (Pseudomonas mendocina).